We begin with the raw amino-acid sequence, 415 residues long: PRKCA-binding protein (415 aa).

Residues 22-105 (KVTLQKDAQN…EVTIHYNKLQ (84 aa)) enclose the PDZ domain. The Zn(2+) site is built by C44 and C46. T82 is modified (phosphothreonine). The AH domain maps to 144 to 357 (LCNDGLVKRL…CYAVLRDADV (214 aa)). Positions 376-415 (EEFTDGEEEEEEEDTAAGEPSRDTRGAAGPLDKGGSWCDS) are disordered. The segment covering 377–391 (EFTDGEEEEEEEDTA) has biased composition (acidic residues). The S-palmitoyl cysteine; by DHHC8 moiety is linked to residue C413.

As to quaternary structure, monomer and homodimer. Interacts with CXADR. Interacts presynaptically with the glutamate receptors GRIA2, GRIA3, GRIK3, isoform 3 of GRIA4, isoform A of GRM4, GRM7 and GRM8; with NAPA and NAPB; and with BTG2. The interaction with NAPA and NAPB disrupts the interaction with GRIA2, conducting to the internalization of GRIA2. Interacts with PRKCA; with the amine transporters SLC6A2 and SLC6A3; with the channels ASIC1 and ASIC2; with the GTP-binding proteins ARF1 and ARF3; with the ephrin receptor tyrosine kinases EPHA7, EPHB1 and EPHB2; with ERBB2 and through its PDZ domain with the C-terminal tail of PRLHR. Interacts with UNC5A. Interacts (via AH domain) with NCS1/FREQ; in a calcium-dependent manner. Interacts with F-actin and associates with the ARP2/3 complex. Interacts (via PDZ domain) with ARF1 (activated); the interaction blocks Arp2/3 complex inhibition. Interacts with SORCS3. In terms of processing, phosphorylation at Thr-82 appears to inhibit the interaction with AMPA receptors. Palmitoylation on Cys-413 is essential for long-term synaptic depression (LTD).

Its subcellular location is the cytoplasm. It localises to the perinuclear region. It is found in the membrane. The protein localises to the postsynaptic density. The protein resides in the synapse. Its subcellular location is the synaptosome. It localises to the cytoskeleton. In terms of biological role, probable adapter protein that bind to and organize the subcellular localization of a variety of membrane proteins containing some PDZ recognition sequence. Involved in the clustering of various receptors, possibly by acting at the receptor internalization level. Plays a role in synaptic plasticity by regulating the trafficking and internalization of AMPA receptors. May be regulated upon PRKCA activation. May regulate ASIC1/ASIC3 channel. Regulates actin polymerization by inhibiting the actin-nucleating activity of the Arp2/3 complex; the function is competitive with nucleation promoting factors and is linked to neuronal morphology regulation and AMPA receptor (AMPAR) endocytosis. Via interaction with the Arp2/3 complex involved in regulation of synaptic plasicity of excitatory synapses and required for spine shrinkage during long-term depression (LTD). Involved in regulation of astrocyte morphology, antagonistic to Arp2/3 complex activator WASL/N-WASP function. This chain is PRKCA-binding protein (PICK1), found in Macaca fascicularis (Crab-eating macaque).